A 515-amino-acid chain; its full sequence is Bifunctional purine biosynthesis protein PurH (515 aa).

The 145-residue stretch at 1–145 folds into the MGS-like domain; that stretch reads MTKRALISVS…KNHASVTVVV (145 aa).

It belongs to the PurH family.

It carries out the reaction (6R)-10-formyltetrahydrofolate + 5-amino-1-(5-phospho-beta-D-ribosyl)imidazole-4-carboxamide = 5-formamido-1-(5-phospho-D-ribosyl)imidazole-4-carboxamide + (6S)-5,6,7,8-tetrahydrofolate. It catalyses the reaction IMP + H2O = 5-formamido-1-(5-phospho-D-ribosyl)imidazole-4-carboxamide. It functions in the pathway purine metabolism; IMP biosynthesis via de novo pathway; 5-formamido-1-(5-phospho-D-ribosyl)imidazole-4-carboxamide from 5-amino-1-(5-phospho-D-ribosyl)imidazole-4-carboxamide (10-formyl THF route): step 1/1. The protein operates within purine metabolism; IMP biosynthesis via de novo pathway; IMP from 5-formamido-1-(5-phospho-D-ribosyl)imidazole-4-carboxamide: step 1/1. The chain is Bifunctional purine biosynthesis protein PurH from Streptococcus agalactiae serotype Ia (strain ATCC 27591 / A909 / CDC SS700).